The following is a 272-amino-acid chain: Formamidopyrimidine-DNA glycosylase (272 aa).

Catalysis depends on Pro2, which acts as the Schiff-base intermediate with DNA. Glu3 (proton donor) is an active-site residue. Lys58 serves as the catalytic Proton donor; for beta-elimination activity. Positions 91, 111, and 153 each coordinate DNA. The segment at 238–272 (AVYGRANKACVICSKPLKEIRQAQRSTVFCINCQS) adopts an FPG-type zinc-finger fold. The Proton donor; for delta-elimination activity role is filled by Arg262.

It belongs to the FPG family. Monomer. The cofactor is Zn(2+).

It carries out the reaction Hydrolysis of DNA containing ring-opened 7-methylguanine residues, releasing 2,6-diamino-4-hydroxy-5-(N-methyl)formamidopyrimidine.. The catalysed reaction is 2'-deoxyribonucleotide-(2'-deoxyribose 5'-phosphate)-2'-deoxyribonucleotide-DNA = a 3'-end 2'-deoxyribonucleotide-(2,3-dehydro-2,3-deoxyribose 5'-phosphate)-DNA + a 5'-end 5'-phospho-2'-deoxyribonucleoside-DNA + H(+). Functionally, involved in base excision repair of DNA damaged by oxidation or by mutagenic agents. Acts as a DNA glycosylase that recognizes and removes damaged bases. Has a preference for oxidized purines, such as 7,8-dihydro-8-oxoguanine (8-oxoG). Has AP (apurinic/apyrimidinic) lyase activity and introduces nicks in the DNA strand. Cleaves the DNA backbone by beta-delta elimination to generate a single-strand break at the site of the removed base with both 3'- and 5'-phosphates. In Marinomonas sp. (strain MWYL1), this protein is Formamidopyrimidine-DNA glycosylase.